We begin with the raw amino-acid sequence, 369 residues long: uncharacterized protein (369 aa).

Helical transmembrane passes span 25-45 (QWVI…TVHW), 47-67 (FGLL…LMPE), 119-139 (LNIV…FGVM), 152-172 (ITGF…FSAL), 206-226 (GALH…LFAI), 235-255 (LQAV…TLHL), 268-288 (LLFT…LPLI), 295-315 (LVGF…TTVF), and 323-343 (WVFY…GTVF).

To B.subtilis ComEC.

It localises to the cell membrane. This is an uncharacterized protein from Mycoplasma pneumoniae (strain ATCC 29342 / M129 / Subtype 1) (Mycoplasmoides pneumoniae).